Consider the following 607-residue polypeptide: Pescadillo homolog (607 aa).

The interval 301–341 (ANVVEQSEKTTEDADEEPETEENLDEFKPADGADNEDSKSL) is disordered. Over residues 313-324 (DADEEPETEENL) the composition is skewed to acidic residues. Basic and acidic residues predominate over residues 325–339 (DEFKPADGADNEDSK). One can recognise a BRCT domain in the interval 348-441 (SNTSLFSNFT…ILERTDLYAC (94 aa)). The stretch at 497–604 (ENVEQIDDAE…RDIEKRKKLK (108 aa)) forms a coiled coil. Positions 531 to 607 (QNSKSAKKTK…EKRKKLKVEN (77 aa)) are disordered. 2 stretches are compositionally biased toward basic and acidic residues: residues 544 to 561 (RDTL…KELS) and 595 to 607 (RDIE…KVEN).

Belongs to the pescadillo family. Component of the NOP7 complex, composed of erb1/SPBC4F6.13c, ppp1/SPBC19F5.05c and ytm1/SPAC890.04c. Within the NOP7 complex erb1/SPBC4F6.13c appears to interact directly with ppp1/SPBC19F5.05c and ytm1/SPAC890.04c. The NOP7 complex also associates with the 66S pre-ribosome.

The protein resides in the nucleus. It localises to the nucleoplasm. It is found in the nucleolus. In terms of biological role, component of the NOP7 complex, which is required for maturation of the 25S and 5.8S ribosomal RNAs and formation of the 60S ribosome. This chain is Pescadillo homolog (ppp1), found in Schizosaccharomyces pombe (strain 972 / ATCC 24843) (Fission yeast).